We begin with the raw amino-acid sequence, 148 residues long: Protein TIFY 5B (148 aa).

Residues 54 to 89 (PKQESQILTIFYNGHMCVSSDLTHLEANAILSLASR) enclose the Tify domain.

This sequence belongs to the TIFY/JAZ family. Ubiquitinated. Targeted for degradation by the SCF(COI1) E3 ubiquitin ligase-proteasome pathway during jasmonate signaling.

The protein resides in the nucleus. Its function is as follows. Repressor of jasmonate responses. The protein is Protein TIFY 5B (TIFY 5B) of Arabidopsis thaliana (Mouse-ear cress).